Here is a 400-residue protein sequence, read N- to C-terminus: Beta-ketoadipyl-CoA thiolase (400 aa).

Catalysis depends on cysteine 90, which acts as the Acyl-thioester intermediate. Active-site proton acceptor residues include histidine 356 and cysteine 386.

Belongs to the thiolase-like superfamily. Thiolase family.

It carries out the reaction succinyl-CoA + acetyl-CoA = 3-oxoadipyl-CoA + CoA. The protein operates within aromatic compound metabolism; beta-ketoadipate pathway; acetyl-CoA and succinyl-CoA from 3-oxoadipate: step 2/2. In terms of biological role, catalyzes thiolytic cleavage of beta-ketoadipyl-CoA to succinyl-CoA and acetyl-CoA. The chain is Beta-ketoadipyl-CoA thiolase (pcaF) from Pseudomonas putida (Arthrobacter siderocapsulatus).